A 244-amino-acid polypeptide reads, in one-letter code: Thiol S-methyltransferase TMT1A (244 aa).

A targeting to lipid droplets region spans residues 1–28 (MELTIFILRLAIYILTFPLYLLNFLGLW). A signal peptide spans 1 to 29 (MELTIFILRLAIYILTFPLYLLNFLGLWS).

This sequence belongs to the methyltransferase superfamily. (Microbial infection) Interacts with HCV non-structural protein 4B/NS4B (via C-terminal region); this interaction may promote the recruitment of NS4B in the proximity of lipid droplet. In terms of assembly, self-associates. Interacts with SNRNP200; this interaction may promote the odontogenic differentiation. Post-translationally, methylated at lysine residues most likely by EZH2. Expressed in the liver.

The protein resides in the lipid droplet. It is found in the endoplasmic reticulum. The protein localises to the membrane. Its subcellular location is the microsome. It localises to the cytoplasm. The protein resides in the cytosol. The catalysed reaction is a thiol + S-adenosyl-L-methionine = a methyl thioether + S-adenosyl-L-homocysteine + H(+). It carries out the reaction an adenosine in mRNA + S-adenosyl-L-methionine = an N(6)-methyladenosine in mRNA + S-adenosyl-L-homocysteine + H(+). Inhibited by 2,3-dichloro-alpha-methylbenzylamine (DCMB). In terms of biological role, thiol S-methyltransferase that catalyzes the transfer of a methyl group from S-adenosyl-L-methionine to alkyl and phenolic thiol-containing acceptor substrates. Together with TMT1B accounts for most of S-thiol methylation activity in the endoplasmic reticulum of hepatocytes. Able to methylate the N6 position of adenosine residues in long non-coding RNAs (lncRNAs). May facilitate lncRNAs transfer into exosomes at the tumor-stroma interface. Promotes osteogenic and odontogenic differentiation by regulating the expression of genes involved in stem cell differentiation and survival. Targeted from the endoplasmic reticulum to lipid droplets, where it recruits cellular proteins to form functional organelles. Functionally, (Microbial infection) May be involved in the assembly and release stages of hepatitis C virus (HCV) life cycle and thus play a crucial role in HCV propagation. The sequence is that of Thiol S-methyltransferase TMT1A from Homo sapiens (Human).